Consider the following 267-residue polypeptide: Phosphatidylserine decarboxylase proenzyme (267 aa).

Active-site charge relay system; for autoendoproteolytic cleavage activity residues include Asp-78, His-132, and Ser-236. Catalysis depends on Ser-236, which acts as the Schiff-base intermediate with substrate; via pyruvic acid; for decarboxylase activity. The residue at position 236 (Ser-236) is a Pyruvic acid (Ser); by autocatalysis.

It belongs to the phosphatidylserine decarboxylase family. PSD-B subfamily. Prokaryotic type I sub-subfamily. As to quaternary structure, heterodimer of a large membrane-associated beta subunit and a small pyruvoyl-containing alpha subunit. Pyruvate serves as cofactor. In terms of processing, is synthesized initially as an inactive proenzyme. Formation of the active enzyme involves a self-maturation process in which the active site pyruvoyl group is generated from an internal serine residue via an autocatalytic post-translational modification. Two non-identical subunits are generated from the proenzyme in this reaction, and the pyruvate is formed at the N-terminus of the alpha chain, which is derived from the carboxyl end of the proenzyme. The autoendoproteolytic cleavage occurs by a canonical serine protease mechanism, in which the side chain hydroxyl group of the serine supplies its oxygen atom to form the C-terminus of the beta chain, while the remainder of the serine residue undergoes an oxidative deamination to produce ammonia and the pyruvoyl prosthetic group on the alpha chain. During this reaction, the Ser that is part of the protease active site of the proenzyme becomes the pyruvoyl prosthetic group, which constitutes an essential element of the active site of the mature decarboxylase.

It is found in the cell membrane. The enzyme catalyses a 1,2-diacyl-sn-glycero-3-phospho-L-serine + H(+) = a 1,2-diacyl-sn-glycero-3-phosphoethanolamine + CO2. It participates in phospholipid metabolism; phosphatidylethanolamine biosynthesis; phosphatidylethanolamine from CDP-diacylglycerol: step 2/2. In terms of biological role, catalyzes the formation of phosphatidylethanolamine (PtdEtn) from phosphatidylserine (PtdSer). This is Phosphatidylserine decarboxylase proenzyme from Helicobacter pylori (strain ATCC 700392 / 26695) (Campylobacter pylori).